Here is a 112-residue protein sequence, read N- to C-terminus: MGGCSTRGKRPSALSLLLLLLLSGIAASALPLESGPTGQDSVQDATGGRRTGLLTFLAWWHEWASQDSSSTAFEGGTPELSKRQERPPLQQPPHRDKKPCKNFFWKTFSSCK.

The signal sequence occupies residues 1-27; sequence MGGCSTRGKRPSALSLLLLLLLSGIAA. Residues 28-81 constitute a propeptide that is removed on maturation; sequence SALPLESGPTGQDSVQDATGGRRTGLLTFLAWWHEWASQDSSSTAFEGGTPELS. A disordered region spans residues 66-101; it reads QDSSSTAFEGGTPELSKRQERPPLQQPPHRDKKPCK. C100 and C111 are oxidised to a cystine.

This sequence belongs to the somatostatin family. As to expression, interneurons in the cerebral cortex and hippocampus.

The protein localises to the secreted. Neuropeptide with neuronal depressant and sleep-modulating properties. The sequence is that of Cortistatin (Cort) from Rattus norvegicus (Rat).